The sequence spans 62 residues: Large ribosomal subunit protein uL29 (62 aa).

It belongs to the universal ribosomal protein uL29 family.

In Acholeplasma laidlawii (strain PG-8A), this protein is Large ribosomal subunit protein uL29.